Reading from the N-terminus, the 425-residue chain is Serine--tRNA ligase (425 aa).

L-serine is bound at residue 231–233 (TAE). Residue 262 to 264 (RSE) participates in ATP binding. E285 contributes to the L-serine binding site. ATP is bound at residue 349–352 (EISS). An L-serine-binding site is contributed by S385.

Belongs to the class-II aminoacyl-tRNA synthetase family. Type-1 seryl-tRNA synthetase subfamily. In terms of assembly, homodimer. The tRNA molecule binds across the dimer.

The protein resides in the cytoplasm. The enzyme catalyses tRNA(Ser) + L-serine + ATP = L-seryl-tRNA(Ser) + AMP + diphosphate + H(+). It catalyses the reaction tRNA(Sec) + L-serine + ATP = L-seryl-tRNA(Sec) + AMP + diphosphate + H(+). It participates in aminoacyl-tRNA biosynthesis; selenocysteinyl-tRNA(Sec) biosynthesis; L-seryl-tRNA(Sec) from L-serine and tRNA(Sec): step 1/1. In terms of biological role, catalyzes the attachment of serine to tRNA(Ser). Is also able to aminoacylate tRNA(Sec) with serine, to form the misacylated tRNA L-seryl-tRNA(Sec), which will be further converted into selenocysteinyl-tRNA(Sec). This chain is Serine--tRNA ligase, found in Bacillus subtilis (strain 168).